Reading from the N-terminus, the 65-residue chain is Beta-defensin 17 (65 aa).

The first 19 residues, 1–19, serve as a signal peptide directing secretion; sequence MKFHLLFFILLFSITILTG. Cystine bridges form between C35-C63, C42-C56, and C46-C64.

It belongs to the beta-defensin family.

Its subcellular location is the secreted. In terms of biological role, has antibacterial activity. This Rattus norvegicus (Rat) protein is Beta-defensin 17 (Defb17).